A 164-amino-acid chain; its full sequence is uncharacterized protein (164 aa).

This is an uncharacterized protein from Saccharomyces cerevisiae (strain ATCC 204508 / S288c) (Baker's yeast).